Reading from the N-terminus, the 574-residue chain is Isocitrate dehydrogenase kinase/phosphatase (574 aa).

ATP contacts are provided by residues A315–M321 and K336. D371 is a catalytic residue.

The protein belongs to the AceK family.

The protein resides in the cytoplasm. The enzyme catalyses L-seryl-[isocitrate dehydrogenase] + ATP = O-phospho-L-seryl-[isocitrate dehydrogenase] + ADP + H(+). In terms of biological role, bifunctional enzyme which can phosphorylate or dephosphorylate isocitrate dehydrogenase (IDH) on a specific serine residue. This is a regulatory mechanism which enables bacteria to bypass the Krebs cycle via the glyoxylate shunt in response to the source of carbon. When bacteria are grown on glucose, IDH is fully active and unphosphorylated, but when grown on acetate or ethanol, the activity of IDH declines drastically concomitant with its phosphorylation. This Escherichia coli (strain SMS-3-5 / SECEC) protein is Isocitrate dehydrogenase kinase/phosphatase.